A 294-amino-acid chain; its full sequence is Ribosomal protein L11 methyltransferase (294 aa).

4 residues coordinate S-adenosyl-L-methionine: Thr-145, Gly-166, Asp-188, and Asn-230.

This sequence belongs to the methyltransferase superfamily. PrmA family.

The protein localises to the cytoplasm. The catalysed reaction is L-lysyl-[protein] + 3 S-adenosyl-L-methionine = N(6),N(6),N(6)-trimethyl-L-lysyl-[protein] + 3 S-adenosyl-L-homocysteine + 3 H(+). Methylates ribosomal protein L11. In Glaesserella parasuis serovar 5 (strain SH0165) (Haemophilus parasuis), this protein is Ribosomal protein L11 methyltransferase.